The following is a 443-amino-acid chain: MTKTYHFIGIKGSGMSALALMLHQMGHKVQGSDVEKYYFTQRGLEQAGIQILPFDEKNITADVELIAGNAFRPDNNVEIAYADAQGYTYKRYHEFLGEFMKGFTSLGVAGAHGKTSTTGLLAHVMRNITDTSFLIGDGTGRGSANAQYFVFESDEYERHFAPYHPEYSIITNIDFDHPDYFTSLEDVFNAFNDYAKQVKNALFVFGEDEQLRRITANAPIYYYGLEDNNDFVAYDLKPSTSGSQFKVRHGEEELGEFQIPTFGKHNVMNATAVIANLYIAGFDLQLVAEHLKTFGGVKRRFTEKIVNDTVIIDDFAHHPTEIIATIDAARQKYPSKELVAIFQPHTFTRTIALLDEFADALNGADAVYLAQIYGSARETDNGQVKVEDLAAKINKKGGLVTVENTSPLLDHDNAVYVFMGAGDIQSYEYSFERLLSNLTNNVQ.

Residue 110–116 participates in ATP binding; it reads GAHGKTS.

This sequence belongs to the MurCDEF family.

It is found in the cytoplasm. It carries out the reaction UDP-N-acetyl-alpha-D-muramate + L-alanine + ATP = UDP-N-acetyl-alpha-D-muramoyl-L-alanine + ADP + phosphate + H(+). Its pathway is cell wall biogenesis; peptidoglycan biosynthesis. Functionally, cell wall formation. The protein is UDP-N-acetylmuramate--L-alanine ligase of Streptococcus suis (strain 98HAH33).